We begin with the raw amino-acid sequence, 339 residues long: Phenylalanine--tRNA ligase alpha subunit (339 aa).

Glutamate 254 contacts Mg(2+).

This sequence belongs to the class-II aminoacyl-tRNA synthetase family. Phe-tRNA synthetase alpha subunit type 1 subfamily. Tetramer of two alpha and two beta subunits. Requires Mg(2+) as cofactor.

It localises to the cytoplasm. The enzyme catalyses tRNA(Phe) + L-phenylalanine + ATP = L-phenylalanyl-tRNA(Phe) + AMP + diphosphate + H(+). The chain is Phenylalanine--tRNA ligase alpha subunit from Clostridium perfringens (strain SM101 / Type A).